Reading from the N-terminus, the 1619-residue chain is Rap-GAP domain-containing protein DDB_G0281809 (1619 aa).

4 disordered regions span residues 128–249 (SMSN…TTPI), 289–316 (QQQQ…MPGS), 907–974 (SIGG…PYIN), and 1134–1153 (ISNN…TSNN). Composition is skewed to low complexity over residues 130–204 (SNNN…SLSL) and 231–249 (QISA…TTPI). Positions 265 to 295 (FNEVVQQQQQQQQQQQQQQQQQQQQQQQQQS) form a coiled coil. 2 stretches are compositionally biased toward low complexity: residues 916–926 (SGNSSQPSSTG) and 934–965 (SGSK…NGGS). One can recognise a Rap-GAP domain in the interval 1273–1494 (LNMLDSVSER…TNRKKLISDI (222 aa)). A disordered region spans residues 1554 to 1619 (IGTFTLPPPP…LSQSEDQSHK (66 aa)). Residues 1559 to 1573 (LPPPPISPTISPQPS) are compositionally biased toward pro residues. Positions 1574-1590 (PHLSSSGGSWASSKGGS) are enriched in low complexity. The segment covering 1591–1619 (TQPTTPSGRTSNFLSRRPNLSQSEDQSHK) has biased composition (polar residues).

The polypeptide is Rap-GAP domain-containing protein DDB_G0281809 (Dictyostelium discoideum (Social amoeba)).